We begin with the raw amino-acid sequence, 952 residues long: Meiosis-specific coiled-coil domain-containing protein MEIOC (952 aa).

Disordered regions lie at residues 1-23 (MEVR…EGLE), 609-629 (QAKP…LDGL), and 933-952 (VHES…TNKH). The segment covering 617–627 (YDPEEGPKHLD) has biased composition (basic and acidic residues). Residues 936–952 (SINSSNPMNQRGETNKH) are compositionally biased toward polar residues.

In terms of assembly, interacts with YTHDC2; binds transcript that regulate the mitotic cell cycle inhibiting progression into metaphase, thereby allowing meiotic prophase to proceed normally. Interacts with RBM46. As to expression, expressed in fetal ovaries. Expressed in testis.

Its subcellular location is the cytoplasm. The protein resides in the nucleus. Its function is as follows. Is required for meiosis completion in both male and female germ cells. Confers stability to numerous meiotic mRNAs in gonads allowing proper initiation and progression into meiosis prophase I. The function may involve YTHDC2 and is independent of induction by retinoic acid (RA). Maintains an extended meiotic prophase I by properly promoting the transition from a mitotic to a meiotic cell cycle program by binding transcripts through its interaction with YTHDC2 that regulate the mitotic cell cycle. The protein is Meiosis-specific coiled-coil domain-containing protein MEIOC of Homo sapiens (Human).